The sequence spans 37 residues: Bacteriocin lactococcin MMFII (37 aa).

The cysteines at positions 9 and 14 are disulfide-linked.

It localises to the secreted. Bacteriocin active against Listeria monocytogenes and Lactococcus cremoris. This is Bacteriocin lactococcin MMFII from Lactococcus lactis subsp. lactis (Streptococcus lactis).